The chain runs to 317 residues: L-lactate dehydrogenase (317 aa).

NAD(+) contacts are provided by residues V17, D38, K43, Y68, and G82–V83. R91 is a binding site for substrate. Residues S104, V121–N123, and S146 contribute to the NAD(+) site. N123 to D126 is a substrate binding site. Residue D151 to R154 participates in substrate binding. Residues K156 and H171 each contribute to the beta-D-fructose 1,6-bisphosphate site. H178 functions as the Proton acceptor in the catalytic mechanism. Position 224 is a phosphotyrosine (Y224). T233 provides a ligand contact to substrate.

This sequence belongs to the LDH/MDH superfamily. LDH family. As to quaternary structure, homotetramer.

Its subcellular location is the cytoplasm. It catalyses the reaction (S)-lactate + NAD(+) = pyruvate + NADH + H(+). It participates in fermentation; pyruvate fermentation to lactate; (S)-lactate from pyruvate: step 1/1. Its activity is regulated as follows. Allosterically activated by fructose 1,6-bisphosphate (FBP). Functionally, catalyzes the conversion of lactate to pyruvate. The chain is L-lactate dehydrogenase from Clostridium perfringens (strain ATCC 13124 / DSM 756 / JCM 1290 / NCIMB 6125 / NCTC 8237 / Type A).